Consider the following 449-residue polypeptide: Phosphomethylpyrimidine synthase (449 aa).

Substrate-binding positions include Asn80, Met109, Tyr138, His173, 193–195 (SRG), 234–237 (DSLR), and Glu273. His277 provides a ligand contact to Zn(2+). Position 300 (Tyr300) interacts with substrate. Residue His341 coordinates Zn(2+). [4Fe-4S] cluster contacts are provided by Cys421, Cys424, and Cys429.

Belongs to the ThiC family. In terms of assembly, homodimer. [4Fe-4S] cluster is required as a cofactor.

The catalysed reaction is 5-amino-1-(5-phospho-beta-D-ribosyl)imidazole + S-adenosyl-L-methionine = 4-amino-2-methyl-5-(phosphooxymethyl)pyrimidine + CO + 5'-deoxyadenosine + formate + L-methionine + 3 H(+). It functions in the pathway cofactor biosynthesis; thiamine diphosphate biosynthesis. Its function is as follows. Catalyzes the synthesis of the hydroxymethylpyrimidine phosphate (HMP-P) moiety of thiamine from aminoimidazole ribotide (AIR) in a radical S-adenosyl-L-methionine (SAM)-dependent reaction. In Campylobacter hominis (strain ATCC BAA-381 / DSM 21671 / CCUG 45161 / LMG 19568 / NCTC 13146 / CH001A), this protein is Phosphomethylpyrimidine synthase.